Here is a 148-residue protein sequence, read N- to C-terminus: General odorant-binding protein 69a (148 aa).

Positions 1–23 are cleaved as a signal peptide; sequence MVARHFSFFLALLILYDLIPSNQ. 3 disulfides stabilise this stretch: C42/C74, C70/C121, and C112/C130.

The protein belongs to the PBP/GOBP family. As to expression, expressed in the antenna, mostly on the anterior surface of the third antennal segment. Expressed in auxiliary cells and the third antennal segment and exported to the sensillar lymph (at protein level).

The protein resides in the secreted. Odorant-binding protein required for olfactory behavior and activity of pheromone-sensitive neurons in response to the male-specific pheromone cis-vaccenyl acetate (cVA). Modulates social responsivity differently in males and females, regulating male aggression and female receptivity respectively. The protein is General odorant-binding protein 69a (Obp69a) of Drosophila melanogaster (Fruit fly).